A 188-amino-acid chain; its full sequence is Mitochondrial import inner membrane translocase subunit TIM23-2 (188 aa).

Helical transmembrane passes span 64–84 (TGTA…ITGV), 112–131 (GNRI…GIVA), 138–154 (VWTS…VCRA), and 161–178 (AAVA…VVAG).

Belongs to the Tim17/Tim22/Tim23 family. In terms of assembly, homomultimer. Component of the TIM17:23 complex at least composed of TIM23, TIM17 and TIM50. The complex interacts with the TIM44 component of the PAM complex. Also part of the NADH-ubiquinone oxidoreductase complex I. Interacts with OEP163, TIM17-2, TIM21, TIM50 and MPPA2. Expressed in roots and young cotyledons. Detected in leaves and flowers.

The protein localises to the mitochondrion inner membrane. Essential component of the TIM17:23 complex, a complex that mediates the translocation of transit peptide-containing proteins across the mitochondrial inner membrane. Links the inner and outer membranes. This chain is Mitochondrial import inner membrane translocase subunit TIM23-2 (TIM23-2), found in Arabidopsis thaliana (Mouse-ear cress).